We begin with the raw amino-acid sequence, 275 residues long: Formamidopyrimidine-DNA glycosylase (275 aa).

Residue Pro2 is the Schiff-base intermediate with DNA of the active site. Glu3 (proton donor) is an active-site residue. Catalysis depends on Lys58, which acts as the Proton donor; for beta-elimination activity. DNA-binding residues include His91 and Arg110. The FPG-type zinc finger occupies 238–272; it reads QVYGQTGKPCPRCGQAIVKLKVGGRGTHICPKCQK. Residue Arg262 is the Proton donor; for delta-elimination activity of the active site.

Belongs to the FPG family. As to quaternary structure, monomer. It depends on Zn(2+) as a cofactor.

The catalysed reaction is Hydrolysis of DNA containing ring-opened 7-methylguanine residues, releasing 2,6-diamino-4-hydroxy-5-(N-methyl)formamidopyrimidine.. The enzyme catalyses 2'-deoxyribonucleotide-(2'-deoxyribose 5'-phosphate)-2'-deoxyribonucleotide-DNA = a 3'-end 2'-deoxyribonucleotide-(2,3-dehydro-2,3-deoxyribose 5'-phosphate)-DNA + a 5'-end 5'-phospho-2'-deoxyribonucleoside-DNA + H(+). Its function is as follows. Involved in base excision repair of DNA damaged by oxidation or by mutagenic agents. Acts as a DNA glycosylase that recognizes and removes damaged bases. Has a preference for oxidized purines, such as 7,8-dihydro-8-oxoguanine (8-oxoG). Has AP (apurinic/apyrimidinic) lyase activity and introduces nicks in the DNA strand. Cleaves the DNA backbone by beta-delta elimination to generate a single-strand break at the site of the removed base with both 3'- and 5'-phosphates. This Streptococcus pyogenes serotype M28 (strain MGAS6180) protein is Formamidopyrimidine-DNA glycosylase.